The sequence spans 547 residues: Putative laccase-5 (547 aa).

An N-terminal signal peptide occupies residues 1–35 (MGTPRGLRNAGSSSSACRFLAAFAVLLALPTLTAG). Plastocyanin-like domains follow at residues 43–159 (NVQM…PKRG) and 170–323 (ELPP…YAPT). N48 and N89 each carry an N-linked (GlcNAc...) asparagine glycan. H93, H95, H138, and H140 together coordinate Cu cation. 10 N-linked (GlcNAc...) asparagine glycosylation sites follow: N199, N215, N251, N311, N342, N349, N388, N395, N405, and N430. Positions 408 to 531 (FVRPRVALLE…SMAWLVNDGP (124 aa)) constitute a Plastocyanin-like 3 domain. Residues H448, H451, H453, H510, C511, H512, and H516 each contribute to the Cu cation site.

It belongs to the multicopper oxidase family. The cofactor is Cu cation.

The protein localises to the secreted. It is found in the extracellular space. It localises to the apoplast. The catalysed reaction is 4 hydroquinone + O2 = 4 benzosemiquinone + 2 H2O. Functionally, lignin degradation and detoxification of lignin-derived products. The sequence is that of Putative laccase-5 (LAC5) from Oryza sativa subsp. japonica (Rice).